Reading from the N-terminus, the 644-residue chain is G-protein coupled receptor-associated protein LMBRD2 (644 aa).

The Extracellular portion of the chain corresponds to 1–4; it reads MGTV. The helical transmembrane segment at 5 to 27 threads the bilayer; that stretch reads SLAVQLFIVFLLTSYLLNKYSTI. Topologically, residues 28 to 31 are cytoplasmic; that stretch reads RKQN. A helical transmembrane segment spans residues 32-52; sequence PIVTISTFIGWYFSLIIVFVL. The Extracellular portion of the chain corresponds to 53-102; that stretch reads PLDVAITFFHKCENDRQRVLNTTSTPAPIVPECELPGGYVPDDVLFDLWR. N73 is a glycosylation site (N-linked (GlcNAc...) asparagine). A helical membrane pass occupies residues 103–123; the sequence is VVYWSAQILTWLILPLLQSYV. The Cytoplasmic portion of the chain corresponds to 124–145; the sequence is TAGNFTIFGKIRAAVINNTVYY. The chain crosses the membrane as a helical span at residues 146–166; sequence AIYSLCFLAILIYAMFKGVSI. Topologically, residues 167-172 are extracellular; the sequence is NIENLK. A helical membrane pass occupies residues 173–193; it reads VILVSASNTWGLFLLVVLLGH. Over 194-369 the chain is Cytoplasmic; sequence GLVELPRSLW…RLQTPFCRVL (176 aa). The stretch at 216–245 forms a coiled coil; that stretch reads YFDIEKLASEKSEAEENVKEIYKKVRVLFN. Residues 370-390 form a helical membrane-spanning segment; sequence GVVTVFMTFFVLFSECTFFVV. Over 391 to 412 the chain is Extracellular; sequence SYTVSPAAFVTEYASNRFHYKY. The chain crosses the membrane as a helical span at residues 413 to 433; it reads TQFVAFGIIVYLITCAYFTIF. Over 434–453 the chain is Cytoplasmic; the sequence is RLQIYKYYHLDPNGHTDENS. Residues 454–474 form a helical membrane-spanning segment; the sequence is ILFSAILLCRLTPPICLNFLG. Over 475 to 502 the chain is Extracellular; that stretch reads MIHMDSHVSMAKSFGVETQFTKLMGHLD. The helical transmembrane segment at 503-523 threads the bilayer; it reads VIPILAKGINIYLPICIILLC. The Cytoplasmic portion of the chain corresponds to 524-644; that stretch reads AIHYYRVGAY…PSSSGFFDDM (121 aa). A compositionally biased stretch (basic and acidic residues) spans 567-576; the sequence is SIKRSNERNQ. The tract at residues 567–644 is disordered; sequence SIKRSNERNQ…PSSSGFFDDM (78 aa). A compositionally biased stretch (low complexity) spans 578–594; it reads NQSWTNTITSNTSTTSN. Polar residues predominate over residues 621-644; that stretch reads VSSTTRISLSPTEHPSSSGFFDDM.

Belongs to the LIMR family.

Its subcellular location is the cell membrane. In terms of biological role, may associate with G-protein coupled receptors and regulate downstream signaling pathways. In Caenorhabditis briggsae, this protein is G-protein coupled receptor-associated protein LMBRD2.